The primary structure comprises 118 residues: Flowering-promoting factor 1-like protein 4 (118 aa).

Belongs to the FPF1 family.

This Oryza sativa subsp. japonica (Rice) protein is Flowering-promoting factor 1-like protein 4.